A 437-amino-acid polypeptide reads, in one-letter code: Glutamate-1-semialdehyde 2,1-aminomutase (437 aa).

K274 is subject to N6-(pyridoxal phosphate)lysine.

It belongs to the class-III pyridoxal-phosphate-dependent aminotransferase family. HemL subfamily. Homodimer. Pyridoxal 5'-phosphate is required as a cofactor.

The protein localises to the cytoplasm. The enzyme catalyses (S)-4-amino-5-oxopentanoate = 5-aminolevulinate. The protein operates within porphyrin-containing compound metabolism; protoporphyrin-IX biosynthesis; 5-aminolevulinate from L-glutamyl-tRNA(Glu): step 2/2. This is Glutamate-1-semialdehyde 2,1-aminomutase from Verminephrobacter eiseniae (strain EF01-2).